We begin with the raw amino-acid sequence, 124 residues long: Small ribosomal subunit protein eS25 (124 aa).

The segment covering methionine 1–valine 22 has biased composition (basic and acidic residues). Residues methionine 1–glycine 37 form a disordered region. Basic residues predominate over residues glycine 27–glycine 37.

It belongs to the eukaryotic ribosomal protein eS25 family. In terms of assembly, component of the small ribosomal subunit.

It is found in the cytoplasm. In terms of biological role, component of the small ribosomal subunit. The ribosome is a large ribonucleoprotein complex responsible for the synthesis of proteins in the cell. This Ictalurus punctatus (Channel catfish) protein is Small ribosomal subunit protein eS25 (rps25).